Reading from the N-terminus, the 388-residue chain is Ferrochelatase (388 aa).

Fe cation-binding residues include His196 and Glu277.

It belongs to the ferrochelatase family.

The protein localises to the cytoplasm. It carries out the reaction heme b + 2 H(+) = protoporphyrin IX + Fe(2+). It participates in porphyrin-containing compound metabolism; protoheme biosynthesis; protoheme from protoporphyrin-IX: step 1/1. Functionally, catalyzes the ferrous insertion into protoporphyrin IX. This Trichormus variabilis (strain ATCC 29413 / PCC 7937) (Anabaena variabilis) protein is Ferrochelatase.